We begin with the raw amino-acid sequence, 239 residues long: Peptidase E (239 aa).

Active-site charge relay system residues include serine 122, aspartate 137, and histidine 159.

It belongs to the peptidase S51 family.

The protein localises to the cytoplasm. It catalyses the reaction Dipeptidase E catalyzes the hydrolysis of dipeptides Asp-|-Xaa. It does not act on peptides with N-terminal Glu, Asn or Gln, nor does it cleave isoaspartyl peptides.. Its function is as follows. Hydrolyzes dipeptides containing N-terminal aspartate residues. May play a role in allowing the cell to use peptide aspartate to spare carbon otherwise required for the synthesis of the aspartate family of amino acids. This chain is Peptidase E, found in Shewanella baltica (strain OS195).